The primary structure comprises 366 residues: GTP cyclohydrolase 1 type 2 homolog (366 aa).

A divalent metal cation contacts are provided by H64, H65, D102, H326, and E329.

It belongs to the GTP cyclohydrolase I type 2/NIF3 family. Homohexamer.

In Staphylococcus epidermidis (strain ATCC 35984 / DSM 28319 / BCRC 17069 / CCUG 31568 / BM 3577 / RP62A), this protein is GTP cyclohydrolase 1 type 2 homolog.